The chain runs to 855 residues: Sucrose synthase 7 (855 aa).

The segment at 279–758 (SIFNIVIFSI…GLQRIYECYT (480 aa)) is GT-B glycosyltransferase.

This sequence belongs to the glycosyltransferase 1 family. Plant sucrose synthase subfamily. In terms of tissue distribution, predominantly expressed in roots, flowers and immature seeds.

It is found in the cytoplasm. It localises to the membrane. The catalysed reaction is an NDP-alpha-D-glucose + D-fructose = a ribonucleoside 5'-diphosphate + sucrose + H(+). In terms of biological role, sucrose-cleaving enzyme that provides UDP-glucose and fructose for various metabolic pathways. This Oryza sativa subsp. japonica (Rice) protein is Sucrose synthase 7 (SUS7).